The following is a 164-amino-acid chain: ATP synthase subunit b 2 (164 aa).

A helical transmembrane segment spans residues 4–24; it reads TFWAFVGLVLFLALLVYFEVP.

This sequence belongs to the ATPase B chain family. As to quaternary structure, F-type ATPases have 2 components, F(1) - the catalytic core - and F(0) - the membrane proton channel. F(1) has five subunits: alpha(3), beta(3), gamma(1), delta(1), epsilon(1). F(0) has three main subunits: a(1), b(2) and c(10-14). The alpha and beta chains form an alternating ring which encloses part of the gamma chain. F(1) is attached to F(0) by a central stalk formed by the gamma and epsilon chains, while a peripheral stalk is formed by the delta and b chains.

The protein resides in the cell inner membrane. Functionally, f(1)F(0) ATP synthase produces ATP from ADP in the presence of a proton or sodium gradient. F-type ATPases consist of two structural domains, F(1) containing the extramembraneous catalytic core and F(0) containing the membrane proton channel, linked together by a central stalk and a peripheral stalk. During catalysis, ATP synthesis in the catalytic domain of F(1) is coupled via a rotary mechanism of the central stalk subunits to proton translocation. Its function is as follows. Component of the F(0) channel, it forms part of the peripheral stalk, linking F(1) to F(0). The polypeptide is ATP synthase subunit b 2 (Bartonella henselae (strain ATCC 49882 / DSM 28221 / CCUG 30454 / Houston 1) (Rochalimaea henselae)).